Here is a 549-residue protein sequence, read N- to C-terminus: Frizzled/smoothened-like sans CRD protein A (549 aa).

Residues 1–22 (MKFNFKLILIILIINQILIINC) form the signal peptide. Topologically, residues 23–89 (KENKILEIYK…EVNTLSLMIK (67 aa)) are extracellular. N63 carries N-linked (GlcNAc...) asparagine glycosylation. A helical transmembrane segment spans residues 90–110 (ITGTISFIASLILLLIYSPLI). Residues 111-119 (NRMGYNRHT) are Cytoplasmic-facing. Residues 120–140 (IGIFFLTFSVFLIMLTDIIYV) form a helical membrane-spanning segment. Over 141-162 (HHGNDLICPQSHRYSRQNDSGC) the chain is Extracellular. The N-linked (GlcNAc...) asparagine glycan is linked to N158. The helical transmembrane segment at 163–183 (TITGILFQYGCIAAVLFWATL) threads the bilayer. The Cytoplasmic segment spans residues 184 to 198 (SLDLYLTLKKISTKK). The chain crosses the membrane as a helical span at residues 199–219 (VEKWYLIILTLIALILTFVPL). Residues 220 to 241 (VKKSYGYLVTGLACWILDSTDQ) are Extracellular-facing. The helical transmembrane segment at 242-262 (IIFFWAPFTAILGIGSILIVL) threads the bilayer. At 263–287 (VVYEIYKISKITKQNRGIFQSHIRP) the chain is on the cytoplasmic side. A helical transmembrane segment spans residues 288 to 308 (LLMVLFIFGQFLFILAFNALI). The Extracellular portion of the chain corresponds to 309–346 (NNKYDEYSARMDSYIDCLFSSSSYSYLCRLKTFPFEME). The chain crosses the membrane as a helical span at residues 347–367 (FIVLFFLRLIGIEVLIFYGFT). The Cytoplasmic portion of the chain corresponds to 368–549 (QQTKKILLHS…NNNSNNDENN (182 aa)). Low complexity-rich tracts occupy residues 417 to 474 (NNNN…SQQN) and 536 to 549 (NKNI…DENN). Disordered regions lie at residues 417-483 (NNNN…QKLS) and 528-549 (QYEE…DENN). Positions 432 to 475 (NNLNNNLNNNNLNNNNNLNNLNNLNINNNLKNSQNNLNNSQQNE) form a coiled coil.

This sequence belongs to the G-protein coupled receptor Fz/Smo family.

The protein resides in the membrane. In Dictyostelium discoideum (Social amoeba), this protein is Frizzled/smoothened-like sans CRD protein A (fscA).